Reading from the N-terminus, the 119-residue chain is Small ribosomal subunit protein uS10 (119 aa).

Ala-2 carries the N-acetylalanine modification. A Glycyl lysine isopeptide (Lys-Gly) (interchain with G-Cter in ubiquitin) cross-link involves residue Lys-4. N6-succinyllysine; alternate is present on Lys-8. A Glycyl lysine isopeptide (Lys-Gly) (interchain with G-Cter in ubiquitin); alternate cross-link involves residue Lys-8. A Phosphothreonine modification is found at Thr-9. Lys-34 and Lys-75 each carry N6-acetyllysine. Ser-93 is subject to Phosphoserine.

It belongs to the universal ribosomal protein uS10 family. Component of the 40S small ribosomal subunit. Polyubiquitinated by ZNF598 via 'Lys-63'-linked ubiquitin chains when a ribosome has stalled, initiating the ribosome quality control (RQC) pathway to degrade the potentially detrimental aberrant nascent polypeptide. Deubiquitinated by OTUD3 and USP21, antagonizing ZNF598 activity. In terms of processing, ufmylated by UFL1.

Its subcellular location is the cytoplasm. Component of the small ribosomal subunit. The ribosome is a large ribonucleoprotein complex responsible for the synthesis of proteins in the cell. This is Small ribosomal subunit protein uS10 (Rps20) from Rattus norvegicus (Rat).